Reading from the N-terminus, the 7760-residue chain is Malpinin synthetase (7760 aa).

2 disordered regions span residues 42–115 (ENPE…VNEK) and 161–180 (LDLP…GDRV). Residues 65–79 (TPRSASPLSSYTGSP) are compositionally biased toward polar residues. Positions 87–389 (TELSRTLSGD…LSLDERTFLL (303 aa)) are condensation 1. The span at 164–180 (PTDRPRPSHPSFEGDRV) shows a compositional bias: basic and acidic residues. The interval 409–813 (FEQQAERRPH…GRNDHQVKIR (405 aa)) is adenylation 1. In terms of domain architecture, Carrier 1 spans 926–1000 (PPQGELETAI…AFAHAIGQHR (75 aa)). Residue Ser-961 is modified to O-(pantetheine 4'-phosphoryl)serine. Positions 1046-1477 (QDIYALAPLQ…VLPADERKLL (432 aa)) are dual epimerase/condensation (E/C) domain 1. Residues 1498-1893 (FEQYADRVPN…GRTDYQVKIR (396 aa)) are adenylation 2. In terms of domain architecture, Carrier 2 spans 2003–2077 (APEGEVENAI…ALAQSIGEHR (75 aa)). An O-(pantetheine 4'-phosphoryl)serine modification is found at Ser-2038. Residues 2099-2558 (PLIDLNQNDI…LPTEERQLLT (460 aa)) form a dual epimerase/condensation (E/C) domain 2 region. Residues 2578-2973 (FEQHVDRAPD…GRADFQVKIR (396 aa)) are adenylation 3. The Carrier 3 domain occupies 3083–3157 (APQGAVEAAI…ALAQSIGEHR (75 aa)). Ser-3118 carries the post-translational modification O-(pantetheine 4'-phosphoryl)serine. Positions 3203–3634 (QDIYALAPLQ…HLNVLPAEER (432 aa)) are dual epimerase/condensation (E/C) domain 3. An adenylation 4 region spans residues 3658-4057 (FEQQAERTPD…GRNDDQIKIR (400 aa)). One can recognise a Carrier 4 domain in the interval 4174 to 4248 (APQGEVETAL…AFASRVQEQL (75 aa)). An O-(pantetheine 4'-phosphoryl)serine modification is found at Ser-4209. The tract at residues 4267 to 4705 (LPLSFAQQRL…AAEILSQDER (439 aa)) is condensation 2. The tract at residues 4729 to 5133 (FEQRVESTPD…GRNDHQVKIR (405 aa)) is adenylation 5. Residues 5250 to 5324 (APEGEVETAI…VFAASIGHHQ (75 aa)) form the Carrier 5 domain. O-(pantetheine 4'-phosphoryl)serine is present on Ser-5285. The segment at 5370–5804 (QDIYSLSPLQ…VLPAEERTLL (435 aa)) is dual dehydration/condensation (C*) domain. Residues 5825–6224 (FEQQSERTPE…GRNDDQVKIR (400 aa)) form an adenylation 6 region. In terms of domain architecture, Carrier 6 spans 6338-6412 (APQGEVETAL…ALAQSIGQHH (75 aa)). Position 6373 is an O-(pantetheine 4'-phosphoryl)serine (Ser-6373). The dual epimerase/condensation (E/C) domain 4 stretch occupies residues 6458 to 6890 (QDIYALSPLQ…QLDTVPAEEH (433 aa)). The tract at residues 6914-7300 (FEHQVERTPA…KFLPDGNVVC (387 aa)) is adenylation 7. The Carrier 7 domain occupies 7428 to 7503 (EPRGAIENIL…ELAPRLLATG (76 aa)). Ser-7463 is subject to O-(pantetheine 4'-phosphoryl)serine. The thioesterase (TE) domain stretch occupies residues 7561–7722 (DNGNMASSLD…KPYVQGSIEV (162 aa)).

This sequence belongs to the NRP synthetase family.

Heptamodular nonribosomal peptide synthetase that catalyzes the biosynthesis of malpinins, natural products that show biosurfactant activities. Malpinins are acetylated hexapeptides (Ac-D-Leu/Val-D-Arg-D-Leu/Val-L-Phe/Leu-Dhb-D-Trp) containing a non-canonical amino acid derived from dehydration of L-Trp, (Z)-dehydrobutyrine (Dhb), at position 5, as well as a C-terminal D-amino acid, D-tryptophan, that can be oxidized to kynurenine. Incorporated D-amino acids in positions 1, 3 and 4 are variable resulting in the malpinin A-congeners malpinin B to E. Both modules M1 and M3 have relaxed specificity towards aliphatic amino acids (L-Leu &gt; L-Met &gt; L/D-Val &gt; L-Cys), explaining Val at position 1 and 3 in malpinin A-congeners malpinin B to D. The incorporation of L-Leu, but not N-acetyl-L-Leu by module 1 suggests the N-terminal acetylation occurs at a later stage of biosynthesis. Similar to M1 and M3, M4 has a broad substrate spectrum showing the highest activity with L-Phe followed by other hydrophobic amino acids (L-Phe &gt; L-Met = L-Trp). In contrast, M2, M5 and M6 are highly specific for L-Arg, L-Thr, and L-Trp, respectively. Solely, M7 converted its preferred substrate (L-Phe) with a 15 000-fold reduced turnover rate compared to the most active module M6, indicating that its A domain cannot contribute to the malpinin biosynthesis due to low activity. Since the last T domain in malA is apparently not loaded with an amino acid, either the TE domain must offload the oligopeptide from the preceding T domain or the dual E/C domain of M7 must transfer the final peptide chain to the free acceptor T domain of M7 prior to release. In Mortierella alpina (Oleaginous fungus), this protein is Malpinin synthetase.